Here is a 231-residue protein sequence, read N- to C-terminus: 2-C-methyl-D-erythritol 2,4-cyclodiphosphate synthase, chloroplastic (231 aa).

The transit peptide at 1–52 directs the protein to the chloroplast; sequence MATSSTQLLLSSSSLFHSQITKKPFLLPATKIGVWRPKKSLSLSCRPSASVS. Residues D82 and H84 each contribute to the a divalent metal cation site. Residues 82–84, 108–109, 112–120, 130–132, 135–139, D139, 174–180, and 205–209 each bind substrate; these read DLH, HS, DVLLHCVVD, DIG, FPDSD, LQRPKIS, and AKTHE. H116 contacts a divalent metal cation.

Belongs to the IspF family. As to quaternary structure, homotrimer. The cofactor is a divalent metal cation.

It is found in the plastid. The protein resides in the chloroplast stroma. The enzyme catalyses 4-CDP-2-C-methyl-D-erythritol 2-phosphate = 2-C-methyl-D-erythritol 2,4-cyclic diphosphate + CMP. Its pathway is isoprenoid biosynthesis; isopentenyl diphosphate biosynthesis via DXP pathway; isopentenyl diphosphate from 1-deoxy-D-xylulose 5-phosphate: step 4/6. Its function is as follows. Enzyme of the plastid non-mevalonate pathway for isoprenoid biosynthesis that converts 4-diphosphocytidyl-2C-methyl-D-erythritol 2-phosphate into 2C-methyl-D-erythritol 2,4-cyclodiphosphate and CMP. Is essential for chloroplast development. This is 2-C-methyl-D-erythritol 2,4-cyclodiphosphate synthase, chloroplastic from Arabidopsis thaliana (Mouse-ear cress).